The sequence spans 351 residues: Ribosomal RNA small subunit methyltransferase H (351 aa).

S-adenosyl-L-methionine contacts are provided by residues 48–50 (GGY), D67, F94, D115, and Q122. Positions 298-351 (GPVLPSEAETEVNPRARSAKLRAGERTDGPAPPPLSAIETLASLPAPQGRGTRR) are disordered.

The protein belongs to the methyltransferase superfamily. RsmH family.

It is found in the cytoplasm. It catalyses the reaction cytidine(1402) in 16S rRNA + S-adenosyl-L-methionine = N(4)-methylcytidine(1402) in 16S rRNA + S-adenosyl-L-homocysteine + H(+). Its function is as follows. Specifically methylates the N4 position of cytidine in position 1402 (C1402) of 16S rRNA. This is Ribosomal RNA small subunit methyltransferase H from Methylorubrum populi (strain ATCC BAA-705 / NCIMB 13946 / BJ001) (Methylobacterium populi).